We begin with the raw amino-acid sequence, 602 residues long: Elongation factor 4 (602 aa).

The tr-type G domain occupies 7–189 (KHIRNFSIVA…AIVDKIPSPQ (183 aa)). GTP-binding positions include 19–24 (DHGKST) and 136–139 (NKID).

It belongs to the TRAFAC class translation factor GTPase superfamily. Classic translation factor GTPase family. LepA subfamily.

It localises to the cell membrane. The enzyme catalyses GTP + H2O = GDP + phosphate + H(+). Its function is as follows. Required for accurate and efficient protein synthesis under certain stress conditions. May act as a fidelity factor of the translation reaction, by catalyzing a one-codon backward translocation of tRNAs on improperly translocated ribosomes. Back-translocation proceeds from a post-translocation (POST) complex to a pre-translocation (PRE) complex, thus giving elongation factor G a second chance to translocate the tRNAs correctly. Binds to ribosomes in a GTP-dependent manner. The protein is Elongation factor 4 of Clostridium kluyveri (strain ATCC 8527 / DSM 555 / NBRC 12016 / NCIMB 10680 / K1).